The primary structure comprises 316 residues: Protein FLUORESCENT IN BLUE LIGHT, chloroplastic (316 aa).

The transit peptide at 1–26 directs the protein to the chloroplast; that stretch reads MAALIRCCSSFSHTSGGQPPPRDKSR. A helical membrane pass occupies residues 125–145; it reads MFSMPILLLVALIGATVGGLL. Positions 144–175 form a coiled coil; sequence LLARQRKGELQRLNEQLRQINAALRRQAKIES. TPR repeat units lie at residues 203-236, 243-276, and 283-316; these read LISK…AQSL, KKAA…SKRE, and TEAY…LETD.

Part of the FLU-containing chloroplast membrane complex composed of FLU, CRD1, PORB, PORC, CHLP and HEMA1. Interacts with HEMA1 (via C-terminus) only in the absence of light. No interaction with HEMA2.

The protein localises to the plastid. It localises to the chloroplast membrane. It is found in the chloroplast thylakoid membrane. In terms of biological role, negative regulator of tetrapyrrole biosynthesis (including chlorophyll) in chloroplasts, probably via HEMA1 repression. Inhibits especially the magnesium ion Mg(2+) branch of tetrapyrrole biosynthesis, but independently of heme. The protein is Protein FLUORESCENT IN BLUE LIGHT, chloroplastic (FLU) of Arabidopsis thaliana (Mouse-ear cress).